A 522-amino-acid polypeptide reads, in one-letter code: Endochitinase 11 (522 aa).

The first 24 residues, 1–24 (MLFSMVMFTERWWVGSKDCPRVPA), serve as a signal peptide directing secretion. N-linked (GlcNAc...) asparagine glycosylation is found at Asn148 and Asn275. The GH18 domain maps to 235–522 (KHVYAPYVDF…ALTCLRNSTA (288 aa)). Glu346 serves as the catalytic Proton donor. N-linked (GlcNAc...) asparagine glycosylation is found at Asn455 and Asn519.

It belongs to the glycosyl hydrolase 18 family. Chitinase class V subfamily.

It localises to the secreted. The catalysed reaction is Random endo-hydrolysis of N-acetyl-beta-D-glucosaminide (1-&gt;4)-beta-linkages in chitin and chitodextrins.. Secreted chitinase involved in the degradation of chitin, a component of the cell walls of fungi and exoskeletal elements of some animals (including worms and arthropods). Participates in the infection process and directly acts in the penetration process of the host cuticle. This Metarhizium anisopliae (Entomophthora anisopliae) protein is Endochitinase 11 (chi11).